The following is a 338-amino-acid chain: Anthranilate phosphoribosyltransferase (338 aa).

5-phospho-alpha-D-ribose 1-diphosphate contacts are provided by residues Gly81, 84–85 (GD), Thr89, 91–94 (NIST), 109–117 (KHGNRALSS), and Ala121. An anthranilate-binding site is contributed by Gly81. Residue Ser93 participates in Mg(2+) binding. Asn112 is an anthranilate binding site. Residue Arg167 participates in anthranilate binding. Residues Asp225 and Glu226 each coordinate Mg(2+).

This sequence belongs to the anthranilate phosphoribosyltransferase family. In terms of assembly, homodimer. It depends on Mg(2+) as a cofactor.

The catalysed reaction is N-(5-phospho-beta-D-ribosyl)anthranilate + diphosphate = 5-phospho-alpha-D-ribose 1-diphosphate + anthranilate. It functions in the pathway amino-acid biosynthesis; L-tryptophan biosynthesis; L-tryptophan from chorismate: step 2/5. Catalyzes the transfer of the phosphoribosyl group of 5-phosphorylribose-1-pyrophosphate (PRPP) to anthranilate to yield N-(5'-phosphoribosyl)-anthranilate (PRA). This Rhizobium johnstonii (strain DSM 114642 / LMG 32736 / 3841) (Rhizobium leguminosarum bv. viciae) protein is Anthranilate phosphoribosyltransferase.